Here is a 296-residue protein sequence, read N- to C-terminus: Formamidopyrimidine-DNA glycosylase (296 aa).

Proline 2 (schiff-base intermediate with DNA) is an active-site residue. The active-site Proton donor is glutamate 3. Lysine 61 functions as the Proton donor; for beta-elimination activity in the catalytic mechanism. DNA contacts are provided by histidine 95, arginine 122, and lysine 169. The FPG-type zinc-finger motif lies at 255 to 289 (NAYGRNDQPCARCGTPIQRETFMNRSSYSCPRCQP). Arginine 279 acts as the Proton donor; for delta-elimination activity in catalysis.

The protein belongs to the FPG family. As to quaternary structure, monomer. It depends on Zn(2+) as a cofactor.

It carries out the reaction Hydrolysis of DNA containing ring-opened 7-methylguanine residues, releasing 2,6-diamino-4-hydroxy-5-(N-methyl)formamidopyrimidine.. The enzyme catalyses 2'-deoxyribonucleotide-(2'-deoxyribose 5'-phosphate)-2'-deoxyribonucleotide-DNA = a 3'-end 2'-deoxyribonucleotide-(2,3-dehydro-2,3-deoxyribose 5'-phosphate)-DNA + a 5'-end 5'-phospho-2'-deoxyribonucleoside-DNA + H(+). Involved in base excision repair of DNA damaged by oxidation or by mutagenic agents. Acts as a DNA glycosylase that recognizes and removes damaged bases. Has a preference for oxidized purines, such as 7,8-dihydro-8-oxoguanine (8-oxoG). Has AP (apurinic/apyrimidinic) lyase activity and introduces nicks in the DNA strand. Cleaves the DNA backbone by beta-delta elimination to generate a single-strand break at the site of the removed base with both 3'- and 5'-phosphates. In Thermobifida fusca (strain YX), this protein is Formamidopyrimidine-DNA glycosylase.